We begin with the raw amino-acid sequence, 470 residues long: Ribosomal protein uS12 methylthiotransferase RimO (470 aa).

Residues 20–131 (PTVAFAHLGC…IVEVLQQVEA (112 aa)) enclose the MTTase N-terminal domain. Residues cysteine 29, cysteine 65, cysteine 94, cysteine 169, cysteine 173, and cysteine 176 each contribute to the [4Fe-4S] cluster site. The region spanning 155–384 (TTGEAVAYLK…MTLQQPISAA (230 aa)) is the Radical SAM core domain. One can recognise a TRAM domain in the interval 387–458 (ASWIGKTVDV…IYDLSGHVVS (72 aa)).

This sequence belongs to the methylthiotransferase family. RimO subfamily. The cofactor is [4Fe-4S] cluster.

Its subcellular location is the cytoplasm. It carries out the reaction L-aspartate(89)-[ribosomal protein uS12]-hydrogen + (sulfur carrier)-SH + AH2 + 2 S-adenosyl-L-methionine = 3-methylsulfanyl-L-aspartate(89)-[ribosomal protein uS12]-hydrogen + (sulfur carrier)-H + 5'-deoxyadenosine + L-methionine + A + S-adenosyl-L-homocysteine + 2 H(+). Catalyzes the methylthiolation of an aspartic acid residue of ribosomal protein uS12. This chain is Ribosomal protein uS12 methylthiotransferase RimO, found in Synechococcus sp. (strain CC9311).